Consider the following 400-residue polypeptide: Subtilisin-like protease 2 (400 aa).

Positions 1–20 (MKFSQSLIALAACFLPLIAA) are cleaved as a signal peptide. The propeptide occupies 21–119 (APEEAQHAKI…IERDGKVQAN (99 aa)). The Inhibitor I9 domain maps to 42 to 117 (SYIVVFNKGV…AWIERDGKVQ (76 aa)). An N-linked (GlcNAc...) asparagine glycan is attached at Asn82. Residues 128-400 (TWGLGRISHK…NLIAYNGNGA (273 aa)) form the Peptidase S8 domain. Active-site charge relay system residues include Asp160, His192, and Ser345.

It belongs to the peptidase S8 family.

It is found in the secreted. With respect to regulation, potently inhibited by the serine peptidase inhibitor chymostatin. Also inhibited by antpain and PMSF. Functionally, major secreted subtilisin-like serine endopeptidase. Preferentially cleaves substrates containing hydrophobic residues at P4, positively charged residues at P3, small or flexible residues at P2, and large, bulky residues at P1. Mediates the degradation of collagen, the major structural protein in the mammalian host. Degrades the nonhelical regions of collagen that function in the cross-linking of the helical components. May function as virulence factor involved in epidermal wing necrosis observed in white nose syndrome (WNS) in bats. This chain is Subtilisin-like protease 2, found in Pseudogymnoascus destructans (strain ATCC MYA-4855 / 20631-21) (Bat white-nose syndrome fungus).